Consider the following 363-residue polypeptide: Peptide chain release factor 1 (363 aa).

At glutamine 237 the chain carries N5-methylglutamine. A compositionally biased stretch (basic and acidic residues) spans 286-296 (EKRRSAEESTR). Residues 286-305 (EKRRSAEESTRRSLVASGDR) are disordered.

Belongs to the prokaryotic/mitochondrial release factor family. In terms of processing, methylated by PrmC. Methylation increases the termination efficiency of RF1.

The protein localises to the cytoplasm. Functionally, peptide chain release factor 1 directs the termination of translation in response to the peptide chain termination codons UAG and UAA. In Shewanella baltica (strain OS155 / ATCC BAA-1091), this protein is Peptide chain release factor 1.